The primary structure comprises 159 residues: Ribosomal RNA large subunit methyltransferase H (159 aa).

S-adenosyl-L-methionine contacts are provided by residues L76, G108, and 127-132 (FSKMTF).

The protein belongs to the RNA methyltransferase RlmH family. As to quaternary structure, homodimer.

The protein localises to the cytoplasm. It carries out the reaction pseudouridine(1915) in 23S rRNA + S-adenosyl-L-methionine = N(3)-methylpseudouridine(1915) in 23S rRNA + S-adenosyl-L-homocysteine + H(+). In terms of biological role, specifically methylates the pseudouridine at position 1915 (m3Psi1915) in 23S rRNA. The chain is Ribosomal RNA large subunit methyltransferase H from Staphylococcus aureus (strain Mu3 / ATCC 700698).